A 632-amino-acid chain; its full sequence is Threonine--tRNA ligase (632 aa).

In terms of domain architecture, TGS spans 1 to 61 (MPIITLPDGT…KTDANLAIIT (61 aa)). The tract at residues 242–533 (DHRKIGKIQD…LIEHYEGAYP (292 aa)) is catalytic. Zn(2+) is bound by residues Cys333, His384, and His510.

It belongs to the class-II aminoacyl-tRNA synthetase family. In terms of assembly, homodimer. Requires Zn(2+) as cofactor.

It is found in the cytoplasm. It carries out the reaction tRNA(Thr) + L-threonine + ATP = L-threonyl-tRNA(Thr) + AMP + diphosphate + H(+). In terms of biological role, catalyzes the attachment of threonine to tRNA(Thr) in a two-step reaction: L-threonine is first activated by ATP to form Thr-AMP and then transferred to the acceptor end of tRNA(Thr). Also edits incorrectly charged L-seryl-tRNA(Thr). The sequence is that of Threonine--tRNA ligase from Ruthia magnifica subsp. Calyptogena magnifica.